The sequence spans 726 residues: Cyclin-T1 (726 aa).

S117 is modified (phosphoserine). The Nuclear localization signal, and interaction with Tat-TAR RNA signature appears at 253–270 (KRIWNWRACEAAKKTKAD). At S340 the chain carries Phosphoserine. K342 participates in a covalent cross-link: Glycyl lysine isopeptide (Lys-Gly) (interchain with G-Cter in SUMO2). Positions 360-385 (VDHSLPQDGSNAFISQKQNSKSVPSA) are disordered. The segment covering 366–382 (QDGSNAFISQKQNSKSV) has biased composition (polar residues). Residues 384 to 425 (SAKVSLKEYRAKHAEELAAQKRQLENMEANVKSQYAYAAQNL) are a coiled coil. S388 carries the post-translational modification Phosphoserine. Position 390 is an N6-acetyllysine (K390). Residue K415 forms a Glycyl lysine isopeptide (Lys-Gly) (interchain with G-Cter in SUMO2) linkage. ADP-ribosylserine occurs at positions 416, 474, and 475. Positions 480–550 (IKMRIKVHAA…RPGDPKHSSQ (71 aa)) are histidine-rich domain (HRD). A Glycyl lysine isopeptide (Lys-Gly) (interchain with G-Cter in SUMO2) cross-link involves residue K481. K485 carries the post-translational modification N6-(ADP-ribosyl)lysine. Residue H487 is modified to ADP-ribosylhistidine. Residues 487 to 506 (HAAADKHNSVEDSVTKSREH) are compositionally biased toward basic and acidic residues. Disordered stretches follow at residues 487–650 (HAAA…NGHN) and 688–726 (SDYL…PLPK). S495 and S499 each carry phosphoserine. Residues 507 to 530 (KEKHKTHPSNHHHHHNHHSHKHSH) show a composition bias toward basic residues. The required for interaction with ZMYND8 stretch occupies residues 527 to 570 (KHSHSQLPVGTGNKRPGDPKHSSQTSNLAHKTYSLSSSFSSSSS). H530 carries the post-translational modification ADP-ribosylhistidine. Residues S531, S549, and S552 each carry the ADP-ribosylserine modification. H556 is subject to ADP-ribosylhistidine. A compositionally biased stretch (low complexity) spans 560–570 (SLSSSFSSSSS). ADP-ribosylserine is present on S563. 2 positions are modified to phosphoserine: S564 and S577. Positions 594–609 (STKSSSLNFSFPSLPT) are enriched in low complexity. Residues 615–630 (GHSSDTSGLSFSQPSC) are compositionally biased toward polar residues. S637 bears the ADP-ribosylserine mark. Residues 710 to 726 (PPPLPSEPPPPLPPLPK) show a composition bias toward pro residues.

Belongs to the cyclin family. Cyclin C subfamily. As to quaternary structure, cyclin-T1 is the predominant cyclin that associates with CDK9 to form a heterodimer called P-TEFb. P-TEFb forms a complex with AFF4/AF5Q31. Component of a complex which is at least composed of HTATSF1/Tat-SF1, P-TEFb complex, RNA pol II, SUPT5H, and NCL/nucleolin. Component of the 7SK snRNP complex at least composed of P-TEFb (composed of CDK9 and CCNT1/cyclin-T1), HEXIM1, HEXIM2, BCDIN3, SART3 proteins and 7SK and U6 snRNAs. Interacts (via central region) with ZMYND8 (via N-terminus); the interaction is direct and the association appears to occur between homodimeric ZMYND8 and the activated form of the P-TEFb complex. Interacts with BRD4, targets chromatin binding. Interacts with JMJD6. Interacts with MDFIC. Interacts with HSF1. Interacts with HTATSF1. Interacts with TBX21. (Microbial infection) Interacts with the transactivation region of HIV-1, HIV-2 and SIV Tat. In terms of assembly, (Microbial infection) Interacts with human herpes virus 1 (HHV-1) transcriptional regulator ICP22. Post-translationally, ADP-ribosylation on serine residues by PARP1 in response to DNA damage disrupts the phase separation activity of CCNT1, thereby preventing activation of CDK9. As to expression, ubiquitously expressed.

Its subcellular location is the nucleus. Its function is as follows. Regulatory subunit of the cyclin-dependent kinase pair (CDK9/cyclin-T1) complex, also called positive transcription elongation factor B (P-TEFb), which facilitates the transition from abortive to productive elongation by phosphorylating the CTD (C-terminal domain) of the large subunit of RNA polymerase II (RNA Pol II). Required to activate the protein kinase activity of CDK9: acts by mediating formation of liquid-liquid phase separation (LLPS) that enhances binding of P-TEFb to the CTD of RNA Pol II. Functionally, (Microbial infection) In case of HIV or SIV infections, binds to the transactivation domain of the viral nuclear transcriptional activator, Tat, thereby increasing Tat's affinity for the transactivating response RNA element (TAR RNA). Serves as an essential cofactor for Tat, by promoting RNA Pol II activation, allowing transcription of viral genes. This Homo sapiens (Human) protein is Cyclin-T1 (CCNT1).